The primary structure comprises 269 residues: Shikimate dehydrogenase (NADP(+)) (269 aa).

Shikimate contacts are provided by residues 17–19 (SKS) and T64. K68 functions as the Proton acceptor in the catalytic mechanism. E80 is a binding site for NADP(+). Shikimate is bound by residues N89 and D105. NADP(+) contacts are provided by residues 130–134 (GAGGA), 154–159 (NRTHAK), and M213. Shikimate is bound at residue Y215. G237 lines the NADP(+) pocket.

The protein belongs to the shikimate dehydrogenase family. Homodimer.

It carries out the reaction shikimate + NADP(+) = 3-dehydroshikimate + NADPH + H(+). It participates in metabolic intermediate biosynthesis; chorismate biosynthesis; chorismate from D-erythrose 4-phosphate and phosphoenolpyruvate: step 4/7. Involved in the biosynthesis of the chorismate, which leads to the biosynthesis of aromatic amino acids. Catalyzes the reversible NADPH linked reduction of 3-dehydroshikimate (DHSA) to yield shikimate (SA). This Neisseria pharyngis protein is Shikimate dehydrogenase (NADP(+)).